The sequence spans 379 residues: dTDP-3-amino-3,4,6-trideoxy-alpha-D-glucose transaminase (379 aa).

Residues G67, Q167, 188–193, Y221, Y227, 235–237, and Y318 each bind pyridoxal 5'-phosphate; these read SFYPGK and NSR. N6-(pyridoxal phosphate)lysine is present on K193.

This sequence belongs to the degT/dnrJ/eryC1 family. In terms of assembly, homodimer. It depends on pyridoxal 5'-phosphate as a cofactor.

It catalyses the reaction dTDP-3-amino-3,4,6-trideoxy-alpha-D-glucose + 2-oxoglutarate = dTDP-3-dehydro-4,6-dideoxy-alpha-D-glucose + L-glutamate. The protein operates within antibiotic biosynthesis. Involved in the biosynthesis of dTDP-alpha-D-desosamine, a sugar found in several bacterial macrolide antibiotics. Catalyzes the reversible transfer of the amino group from L-glutamate to the C-3 position of dTDP-3-keto-4,6-deoxyglucose to yield dTDP-3-amino-3,4,6-trideoxyglucose. The protein is dTDP-3-amino-3,4,6-trideoxy-alpha-D-glucose transaminase of Streptomyces venezuelae.